The sequence spans 221 residues: NAD(P)H-hydrate epimerase (221 aa).

The YjeF N-terminal domain occupies 10–211 (MQQYDQYTIN…DIGIYSPAEL (202 aa)). 58–62 (NNGGD) lines the (6S)-NADPHX pocket. Positions 59 and 121 each coordinate K(+). Residues 125–131 (GIGLSKP) and Asp154 each bind (6S)-NADPHX. Ser157 is a K(+) binding site.

It belongs to the NnrE/AIBP family. K(+) is required as a cofactor.

It carries out the reaction (6R)-NADHX = (6S)-NADHX. It catalyses the reaction (6R)-NADPHX = (6S)-NADPHX. Its function is as follows. Catalyzes the epimerization of the S- and R-forms of NAD(P)HX, a damaged form of NAD(P)H that is a result of enzymatic or heat-dependent hydration. This is a prerequisite for the S-specific NAD(P)H-hydrate dehydratase to allow the repair of both epimers of NAD(P)HX. The chain is NAD(P)H-hydrate epimerase from Weissella koreensis (strain KACC 15510).